Here is a 320-residue protein sequence, read N- to C-terminus: o-succinylbenzoate synthase (320 aa).

K133 (proton donor) is an active-site residue. Mg(2+) is bound by residues D161, E190, and D213. K235 (proton acceptor) is an active-site residue.

It belongs to the mandelate racemase/muconate lactonizing enzyme family. MenC type 1 subfamily. Requires a divalent metal cation as cofactor.

It carries out the reaction (1R,6R)-6-hydroxy-2-succinyl-cyclohexa-2,4-diene-1-carboxylate = 2-succinylbenzoate + H2O. It participates in quinol/quinone metabolism; 1,4-dihydroxy-2-naphthoate biosynthesis; 1,4-dihydroxy-2-naphthoate from chorismate: step 4/7. The protein operates within quinol/quinone metabolism; menaquinone biosynthesis. Functionally, converts 2-succinyl-6-hydroxy-2,4-cyclohexadiene-1-carboxylate (SHCHC) to 2-succinylbenzoate (OSB). The polypeptide is o-succinylbenzoate synthase (Escherichia coli O6:H1 (strain CFT073 / ATCC 700928 / UPEC)).